Consider the following 336-residue polypeptide: MIKAYAALEANGKLQPFEYDPGALGANEVEIEVQYCGVCHSDLSMINNEWGISNYPLVPGHEVVGTVAAMGEGVNHVEVGDLVGLGWHSGYCMTCHSCLSGYHNLCATAESTIVGHYGGFGDRVRAKGVSVVKLPKGIDLASAGPLFCGGITVFSPMVELSLKPTAKVAVIGIGGLGHLAVQFLRAWGCEVTAFTSSARKQTEVLELGAHHILDSTNPEAIASAEGKFDYIISTVNLKLDWNLYISTLAPQGHFHFVGVVLEPLDLNLFPLLMGQRSVSASPVGSPATIATMLDFAVRHDIKPVVEQFSFDQINEAIAHLESGKAHYRVVLSHSKN.

Zn(2+)-binding residues include Cys-36, Cys-39, His-61, Cys-92, Cys-95, Cys-98, Cys-106, and Cys-148.

The protein belongs to the zinc-containing alcohol dehydrogenase family. Homotetramer. The cofactor is Zn(2+).

It localises to the cytoplasm. It catalyses the reaction a primary alcohol + NADP(+) = an aldehyde + NADPH + H(+). In terms of biological role, active on a wide variety of primary alcohols and their corresponding aldehydes, but not against ketones nor secondary alcohols. Active on aliphatic compounds up to 5 carbons in length and aromatic alcohols, less effective on branched-chain primary alcohols. Prefers NADPH to NADH. Its catalytic efficiency is greatest for aldehydes, suggesting the reduction of aromatic and medium-chain aliphatic aldehydes is its in vivo activity. Plays a role in tolerance to internally produced ethanol. This chain is Aldehyde reductase AdhA, found in Synechocystis sp. (strain ATCC 27184 / PCC 6803 / Kazusa).